Reading from the N-terminus, the 125-residue chain is Histone H2A (125 aa).

The span at 1–18 shows a compositional bias: basic residues; sequence MSGRGKGGKARAKAKSRS. A disordered region spans residues 1 to 21; that stretch reads MSGRGKGGKARAKAKSRSSRA. N-acetylserine is present on serine 2. At serine 2 the chain carries Phosphoserine. N5-methylglutamine is present on glutamine 104.

The protein belongs to the histone H2A family. In terms of assembly, the nucleosome is a histone octamer containing two molecules each of H2A, H2B, H3 and H4 assembled in one H3-H4 heterotetramer and two H2A-H2B heterodimers. The octamer wraps approximately 147 bp of DNA.

The protein localises to the nucleus. Its subcellular location is the chromosome. In terms of biological role, core component of nucleosome. Nucleosomes wrap and compact DNA into chromatin, limiting DNA accessibility to the cellular machineries which require DNA as a template. Histones thereby play a central role in transcription regulation, DNA repair, DNA replication and chromosomal stability. DNA accessibility is regulated via a complex set of post-translational modifications of histones, also called histone code, and nucleosome remodeling. In Asterias rubens (Common European starfish), this protein is Histone H2A.